A 124-amino-acid polypeptide reads, in one-letter code: uncharacterized protein (124 aa).

It is found in the cytoplasm. The protein localises to the nucleus. This is an uncharacterized protein from Schizosaccharomyces pombe (strain 972 / ATCC 24843) (Fission yeast).